We begin with the raw amino-acid sequence, 683 residues long: Probable metal-nicotianamine transporter YSL3 (683 aa).

The next 14 helical transmembrane spans lie at 29 to 49, 58 to 78, 97 to 117, 142 to 162, 204 to 224, 265 to 285, 309 to 329, 372 to 392, 404 to 424, 448 to 468, 490 to 510, 553 to 573, 595 to 615, and 628 to 648; these read LVTPRAMAVAVVLSVVICFVG, IVPALNMPASILSFFLLKWLI, MFLLTCIITCLNLALTSGFAT, HVPIGKWIVYLFLVGMTGVLI, VATIFKVFFGSFSWSMFQWFY, IVNFGLFFGAIISWGFLYPFL, VFISVTLIITDGMINFLTLIT, IPIPVPVAAYITCAAISTIAI, LAVLYMVIPVVTFCNTYATGL, PGAVVASLLASGVIVAALHIS, TGQIFGVAVGSILCPCVFLAF, CMTFCVVAFCVTVIIDAVVLV, FFAGSYFTIDMCVGSLLLLAW, and SAVAAGLICGEGLFTLPSALL.

The protein belongs to the YSL (TC 2.A.67.2) family.

The protein localises to the membrane. May be involved in the transport of nicotianamine-chelated metals. In Oryza sativa subsp. japonica (Rice), this protein is Probable metal-nicotianamine transporter YSL3 (YSL3).